We begin with the raw amino-acid sequence, 403 residues long: Phosphopentomutase (403 aa).

Mn(2+)-binding residues include Asp-13, Asp-298, His-303, Asp-339, His-340, and His-351.

Belongs to the phosphopentomutase family. Mn(2+) is required as a cofactor.

The protein localises to the cytoplasm. It carries out the reaction 2-deoxy-alpha-D-ribose 1-phosphate = 2-deoxy-D-ribose 5-phosphate. It catalyses the reaction alpha-D-ribose 1-phosphate = D-ribose 5-phosphate. Its pathway is carbohydrate degradation; 2-deoxy-D-ribose 1-phosphate degradation; D-glyceraldehyde 3-phosphate and acetaldehyde from 2-deoxy-alpha-D-ribose 1-phosphate: step 1/2. Its function is as follows. Isomerase that catalyzes the conversion of deoxy-ribose 1-phosphate (dRib-1-P) and ribose 1-phosphate (Rib-1-P) to deoxy-ribose 5-phosphate (dRib-5-P) and ribose 5-phosphate (Rib-5-P), respectively. This is Phosphopentomutase from Streptococcus pyogenes serotype M18 (strain MGAS8232).